The sequence spans 35 residues: Photosystem II reaction center protein M (35 aa).

Residues 5–25 (ILAFIATALFIIIPTAFLLIL) form a helical membrane-spanning segment.

It belongs to the PsbM family. As to quaternary structure, PSII is composed of 1 copy each of membrane proteins PsbA, PsbB, PsbC, PsbD, PsbE, PsbF, PsbH, PsbI, PsbJ, PsbK, PsbL, PsbM, PsbT, PsbX, PsbY, PsbZ, Psb30/Ycf12, at least 3 peripheral proteins of the oxygen-evolving complex and a large number of cofactors. It forms dimeric complexes.

Its subcellular location is the plastid. It localises to the chloroplast thylakoid membrane. In terms of biological role, one of the components of the core complex of photosystem II (PSII). PSII is a light-driven water:plastoquinone oxidoreductase that uses light energy to abstract electrons from H(2)O, generating O(2) and a proton gradient subsequently used for ATP formation. It consists of a core antenna complex that captures photons, and an electron transfer chain that converts photonic excitation into a charge separation. This subunit is found at the monomer-monomer interface. This chain is Photosystem II reaction center protein M, found in Chara vulgaris (Common stonewort).